A 221-amino-acid polypeptide reads, in one-letter code: 7-cyano-7-deazaguanine synthase (221 aa).

ATP is bound at residue 10-20 (FSGGQDSTTCL). The Zn(2+) site is built by C186, C195, C198, and C201.

The protein belongs to the QueC family. Homodimer. The cofactor is Zn(2+).

It carries out the reaction 7-carboxy-7-deazaguanine + NH4(+) + ATP = 7-cyano-7-deazaguanine + ADP + phosphate + H2O + H(+). It functions in the pathway purine metabolism; 7-cyano-7-deazaguanine biosynthesis. Functionally, catalyzes the ATP-dependent conversion of 7-carboxy-7-deazaguanine (CDG) to 7-cyano-7-deazaguanine (preQ(0)). This Geobacillus sp. (strain WCH70) protein is 7-cyano-7-deazaguanine synthase.